The chain runs to 696 residues: DNA ligase (696 aa).

NAD(+) is bound by residues 36-40 (DAEYD), 85-86 (SL), and Glu123. Lys125 acts as the N6-AMP-lysine intermediate in catalysis. Residues Arg146, Glu181, Lys319, and Lys343 each contribute to the NAD(+) site. Residues Cys437, Cys440, Cys455, and Cys461 each contribute to the Zn(2+) site. In terms of domain architecture, BRCT spans 618–696 (PEGTSLAGKT…EDGLKALLGL (79 aa)).

Belongs to the NAD-dependent DNA ligase family. LigA subfamily. Mg(2+) serves as cofactor. It depends on Mn(2+) as a cofactor.

The enzyme catalyses NAD(+) + (deoxyribonucleotide)n-3'-hydroxyl + 5'-phospho-(deoxyribonucleotide)m = (deoxyribonucleotide)n+m + AMP + beta-nicotinamide D-nucleotide.. Functionally, DNA ligase that catalyzes the formation of phosphodiester linkages between 5'-phosphoryl and 3'-hydroxyl groups in double-stranded DNA using NAD as a coenzyme and as the energy source for the reaction. It is essential for DNA replication and repair of damaged DNA. This Bordetella bronchiseptica (strain ATCC BAA-588 / NCTC 13252 / RB50) (Alcaligenes bronchisepticus) protein is DNA ligase.